A 70-amino-acid polypeptide reads, in one-letter code: DNA-directed RNA polymerase subunit epsilon (70 aa).

Belongs to the RNA polymerase subunit epsilon family. RNAP is composed of a core of 2 alpha, a beta and a beta' subunit. The core is associated with a delta subunit, and at least one of epsilon or omega. When a sigma factor is associated with the core the holoenzyme is formed, which can initiate transcription.

The catalysed reaction is RNA(n) + a ribonucleoside 5'-triphosphate = RNA(n+1) + diphosphate. A non-essential component of RNA polymerase (RNAP). The polypeptide is DNA-directed RNA polymerase subunit epsilon (Limosilactobacillus reuteri (strain DSM 20016) (Lactobacillus reuteri)).